The following is a 56-amino-acid chain: Small ribosomal subunit protein uS14 (56 aa).

C21, C24, C39, and C42 together coordinate Zn(2+).

It belongs to the universal ribosomal protein uS14 family. Component of the 40S small ribosomal subunit. It depends on Zn(2+) as a cofactor.

It localises to the cytoplasm. Its subcellular location is the cytosol. The protein localises to the rough endoplasmic reticulum. The sequence is that of Small ribosomal subunit protein uS14 (RpS29) from Culex quinquefasciatus (Southern house mosquito).